We begin with the raw amino-acid sequence, 275 residues long: Large ribosomal subunit protein uL2cz (275 aa).

Disordered regions lie at residues 1 to 20 (MAIHLYKTSTPSTRNGAVDS) and 225 to 275 (NPVD…RRSK).

Belongs to the universal ribosomal protein uL2 family. As to quaternary structure, part of the 50S ribosomal subunit.

It localises to the plastid. The protein localises to the chloroplast. This chain is Large ribosomal subunit protein uL2cz (rpl2-A), found in Populus alba (White poplar).